The following is a 620-amino-acid chain: MALLQISEPGMSAAPHRHRLAAGIDLGTTNSLVATVRSGSAACLPDAEGRVTLPSVVRYLENGGIEVGKTALSAQKTDPLNTVSSAKRLIGRTLADLHQNTHYLPYRFGDNQRVIELHTRQGVKTPVEVSAEILKTLKSRAEETLGGDLVGVVITVPAYFDDAQRQATKDAARLAGLNVLRLLNEPTAAAIAYGLDNASEGTFVVYDLGGGTFDVSVLQLTKGLFEVKATGGNSALGGDDFDHRLFCRLLEQNGLSQLNEQDSQLLLSLVRAAKEQLTTQTEARIQATLSDGMPIDTSISRAEFHNLTQHLVMKTLEPVTQALKDAGVGKNEVKGVIMVGGSTRMLHVQQAVATFFGQTPLNNLNPDEVVALGAAIQANVLAGNKTDGEWLLLDVTPLSLGLETYGGLAEKIIPRNSTIPTARAQDFTTFKDGQTAMTIHVVQGERELVSDCRSLAKFTLRGIPPMAAGAARIRVTFQIDADGLLSVSAQEQSTGVQAQIEVKPSYGLDDGAITRMLKDSMDNAAEDMAARARAEAVVEAESLTDAVNAALELDSDLLDAKELQQIRQGIADLQGRLKDGKAEDIRSAVAKLSRSTDNFAAKRMNRNIQRALTGQSVDNI.

This sequence belongs to the heat shock protein 70 family.

Its function is as follows. Chaperone involved in the maturation of iron-sulfur cluster-containing proteins. Has a low intrinsic ATPase activity which is markedly stimulated by HscB. The polypeptide is Chaperone protein HscA homolog (Neisseria meningitidis serogroup A / serotype 4A (strain DSM 15465 / Z2491)).